The following is a 59-amino-acid chain: Conotoxin reg3.15 (59 aa).

Positions 1–15 are cleaved as a signal peptide; it reads RVLLTICLLLFPLTA. Positions 16-44 are excised as a propeptide; sequence IPLGGDQPAERMRNVRSAVQDPRFDSVGW. Disulfide bonds link Cys45/Cys59, Cys46/Cys55, and Cys51/Cys58.

This sequence belongs to the conotoxin M superfamily. Expressed by the venom duct.

It is found in the secreted. In Conus regius (Crown cone), this protein is Conotoxin reg3.15.